We begin with the raw amino-acid sequence, 178 residues long: Large ribosomal subunit protein uL6 (178 aa).

This sequence belongs to the universal ribosomal protein uL6 family. In terms of assembly, part of the 50S ribosomal subunit.

In terms of biological role, this protein binds to the 23S rRNA, and is important in its secondary structure. It is located near the subunit interface in the base of the L7/L12 stalk, and near the tRNA binding site of the peptidyltransferase center. This Lactococcus lactis subsp. cremoris (strain SK11) protein is Large ribosomal subunit protein uL6.